A 295-amino-acid polypeptide reads, in one-letter code: 4-diphosphocytidyl-2-C-methyl-D-erythritol kinase (295 aa).

Lysine 22 is a catalytic residue. 106 to 116 serves as a coordination point for ATP; that stretch reads PAGGGFGGGSS. Residue aspartate 148 is part of the active site.

It belongs to the GHMP kinase family. IspE subfamily.

It carries out the reaction 4-CDP-2-C-methyl-D-erythritol + ATP = 4-CDP-2-C-methyl-D-erythritol 2-phosphate + ADP + H(+). It functions in the pathway isoprenoid biosynthesis; isopentenyl diphosphate biosynthesis via DXP pathway; isopentenyl diphosphate from 1-deoxy-D-xylulose 5-phosphate: step 3/6. Catalyzes the phosphorylation of the position 2 hydroxy group of 4-diphosphocytidyl-2C-methyl-D-erythritol. The polypeptide is 4-diphosphocytidyl-2-C-methyl-D-erythritol kinase (Xanthomonas oryzae pv. oryzae (strain MAFF 311018)).